The primary structure comprises 749 residues: Probable serine/threonine-protein kinase fhkD (749 aa).

The FHA domain maps to 47–150 (IFFGRNPKRC…NGTFVKGCIL (104 aa)). Residues 84-126 (NNNNNDGDNNNNNNNNNNNNNNNNNNNNNNNNNNNNNNNNNNN) show a composition bias toward low complexity. Positions 84-130 (NNNNNDGDNNNNNNNNNNNNNNNNNNNNNNNNNNNNNNNNNNNTTKN) are disordered. The Protein kinase domain maps to 199-472 (YSIQGILGTG…TKGALSHDWF (274 aa)). ATP contacts are provided by residues 205–213 (LGTGNFSVV) and Lys228. The active-site Proton acceptor is the Asp323. 2 disordered regions span residues 512–620 (NIPM…PAII) and 640–749 (CTPT…LKGS). Residues 516–561 (TLNSTTTNTTSPNNNNNNNNNNNNKNNNKNIIKSLNSNSNNYNNNS) show a composition bias toward low complexity. Over residues 562–572 (VLKKTSQSPKT) the composition is skewed to polar residues. Low complexity-rich tracts occupy residues 590-611 (NNNNNNNNNNNNNNNNNNNNNN) and 651-667 (TNSTTTSTATSMPTSNS). The segment covering 668 to 687 (VTMGTSSTSIPVSNSITMKS) has biased composition (polar residues). A compositionally biased stretch (basic and acidic residues) spans 696–707 (DGDKKRKEKESS). Positions 708-739 (SSENVNDVIVINSNNHNNNNNNNHNINNGISS) are enriched in low complexity.

The protein belongs to the protein kinase superfamily. CAMK Ser/Thr protein kinase family. CHK2 subfamily.

The catalysed reaction is L-seryl-[protein] + ATP = O-phospho-L-seryl-[protein] + ADP + H(+). The enzyme catalyses L-threonyl-[protein] + ATP = O-phospho-L-threonyl-[protein] + ADP + H(+). This Dictyostelium discoideum (Social amoeba) protein is Probable serine/threonine-protein kinase fhkD (fhkD).